We begin with the raw amino-acid sequence, 257 residues long: MSVLALDVARDVAAPRRAEILETLRALADGADATTREIASDDDADALERASCDAYFARARDASEARRACARASEKLRAGGALGVVVDDERTATATTEAMVLAGFTTVTREDDGVVRCVKPNWARGTAFALKSRAVRVNATAADAADAWGASAAADDDELIDESALLTELDVNTAPVKYDDCDVGAGKKACKNCTCGRAEAEAAEEATTAASEETFVSACGNCALGDAFRCAGCPYLGQPAFKDQPGTKVELDLGDDL.

Residues 1 to 132 (MSVLALDVAR…ARGTAFALKS (132 aa)) form an N-terminal SAM-like domain region. The tract at residues 133-171 (RAVRVNATAADAADAWGASAAADDDELIDESALLTELDV) is linker. Residues Cys-181, Cys-190, Cys-193, and Cys-195 each contribute to the [2Fe-2S] cluster site. Residues 181–195 (CDVGAGKKACKNCTC) are fe-S binding site A. The [4Fe-4S] cluster site is built by Cys-219, Cys-222, Cys-230, and Cys-233. 2 consecutive short sequence motifs (cx2C motif) follow at residues 219–222 (CGNC) and 230–233 (CAGC). The interval 219–233 (CGNCALGDAFRCAGC) is fe-S binding site B.

Belongs to the anamorsin family. In terms of assembly, monomer. The cofactor is [2Fe-2S] cluster. Requires [4Fe-4S] cluster as cofactor.

The protein localises to the cytoplasm. It is found in the mitochondrion intermembrane space. Component of the cytosolic iron-sulfur (Fe-S) protein assembly (CIA) machinery. Required for the maturation of extramitochondrial Fe-S proteins. Part of an electron transfer chain functioning in an early step of cytosolic Fe-S biogenesis, facilitating the de novo assembly of a [4Fe-4S] cluster on the cytosolic Fe-S scaffold complex. Electrons are transferred from NADPH via a FAD- and FMN-containing diflavin oxidoreductase. Together with the diflavin oxidoreductase, also required for the assembly of the diferric tyrosyl radical cofactor of ribonucleotide reductase (RNR), probably by providing electrons for reduction during radical cofactor maturation in the catalytic small subunit. This Ostreococcus lucimarinus (strain CCE9901) protein is Anamorsin homolog.